Here is a 210-residue protein sequence, read N- to C-terminus: Pyridoxine/pyridoxamine 5'-phosphate oxidase (210 aa).

Substrate is bound by residues 7 to 10 and Lys65; that span reads RDEY. FMN is bound by residues 60 to 65, 75 to 76, Arg81, Lys82, and Gln104; these read RMVLLK and FT. Tyr122, Arg126, and Ser130 together coordinate substrate. FMN contacts are provided by residues 139 to 140 and Trp183; that span reads QS. Residue 189–191 coordinates substrate; it reads RLH. Arg193 provides a ligand contact to FMN.

This sequence belongs to the pyridoxamine 5'-phosphate oxidase family. As to quaternary structure, homodimer. The cofactor is FMN.

The catalysed reaction is pyridoxamine 5'-phosphate + O2 + H2O = pyridoxal 5'-phosphate + H2O2 + NH4(+). The enzyme catalyses pyridoxine 5'-phosphate + O2 = pyridoxal 5'-phosphate + H2O2. It participates in cofactor metabolism; pyridoxal 5'-phosphate salvage; pyridoxal 5'-phosphate from pyridoxamine 5'-phosphate: step 1/1. The protein operates within cofactor metabolism; pyridoxal 5'-phosphate salvage; pyridoxal 5'-phosphate from pyridoxine 5'-phosphate: step 1/1. Catalyzes the oxidation of either pyridoxine 5'-phosphate (PNP) or pyridoxamine 5'-phosphate (PMP) into pyridoxal 5'-phosphate (PLP). The polypeptide is Pyridoxine/pyridoxamine 5'-phosphate oxidase (Haemophilus influenzae (strain 86-028NP)).